The chain runs to 54 residues: Potassium channel toxin alpha-KTx 14.2 (54 aa).

A signal peptide spans 1 to 23 (MKIFFAILLILAVCSMAIWTVNG). 3 disulfides stabilise this stretch: cysteine 30–cysteine 46, cysteine 36–cysteine 51, and cysteine 40–cysteine 53.

It belongs to the short scorpion toxin superfamily. Potassium channel inhibitor family. Alpha-KTx 14 subfamily. Expressed by the venom gland.

It is found in the secreted. In terms of biological role, inhibits potassium channels. May be active towards small conductance calcium-activated potassium channels (KCNN, SK), and less active towards voltage-gated potassium channels (Kv/KCN). The protein is Potassium channel toxin alpha-KTx 14.2 of Olivierus martensii (Manchurian scorpion).